The primary structure comprises 251 residues: 5-oxoprolinase subunit A (251 aa).

It belongs to the LamB/PxpA family. In terms of assembly, forms a complex composed of PxpA, PxpB and PxpC.

The catalysed reaction is 5-oxo-L-proline + ATP + 2 H2O = L-glutamate + ADP + phosphate + H(+). Catalyzes the cleavage of 5-oxoproline to form L-glutamate coupled to the hydrolysis of ATP to ADP and inorganic phosphate. This is 5-oxoprolinase subunit A from Tolumonas auensis (strain DSM 9187 / NBRC 110442 / TA 4).